The chain runs to 647 residues: MEHIQGAWKTISNGFGLKDSVFDGPNCISPTIVQQFGYQRRASDDGKISDTSKTSNTIRVFLPNKQRTVVNVRNGMTLHDCLMKALKVRGLQPECCAVFRLVTEPKGKKVRLDWNTDAASLIGEELQVDFLDHVPLTTHNFARKTFLKLAFCDICQKFLLNGFRCQTCGYKFHEHCSTKVPTMCVDWSNIRQLLLFPNSNISDSGVPALPPLTMRRMRESVSRIPVSSQHRYSTPHVFTFNTSNPSSEGTLSQRQRSTSTPNVHMVSTTMPVDSRIIEDAIRNHSESASPSALSGSPNNMSPTGWSQPKTPVPAQRERAPGTNTQEKNKIRPRGQRDSSYYWEIEASEVMLSTRIGSGSFGTVYKGKWHGDVAVKILKVVDPTPEQFQAFRNEVAVLRKTRHVNILLFMGYMTKDNLAIVTQWCEGSSLYKHLHVQETKFQMFQLIDIARQTAQGMDYLHAKNIIHRDMKSNNIFLHEGLTVKIGDFGLATVKSRWSGSQQVEQPTGSILWMAPEVIRMQDSNPFSFQSDVYSYGIVLYELMTGELPYSHINNRDQIIFMVGRGYASPDLSKLYKNCPKAMKRLVADCLKKVREERPLFPQILSSIELLQHSLPKINRSASEPSLHRASHTEDINSCTLTSTRLPVF.

At S43 the chain carries Phosphoserine. Residues 56 to 131 form the RBD domain; sequence NTIRVFLPNK…IGEELQVDFL (76 aa). The Phorbol-ester/DAG-type zinc-finger motif lies at 138–184; sequence THNFARKTFLKLAFCDICQKFLLNGFRCQTCGYKFHEHCSTKVPTMC. 2 disordered regions span residues 236-269 and 284-334; these read HVFT…VSTT and HSES…RPRG. Residues 239–269 are compositionally biased toward polar residues; it reads TFNTSNPSSEGTLSQRQRSTSTPNVHMVSTT. S259 bears the Phosphoserine mark. At T268 the chain carries Phosphothreonine; by autocatalysis. The span at 286-297 shows a compositional bias: low complexity; that stretch reads ESASPSALSGSP. Residues 298 to 309 show a composition bias toward polar residues; the sequence is NNMSPTGWSQPK. The residue at position 338 (S338) is a Phosphoserine. In terms of domain architecture, Protein kinase spans 349–609; the sequence is VMLSTRIGSG…PQILSSIELL (261 aa). Residues 355 to 363 and K375 contribute to the ATP site; that span reads IGSGSFGTV. The active-site Proton acceptor is the D468. Phosphoserine occurs at positions 499 and 621.

It belongs to the protein kinase superfamily. TKL Ser/Thr protein kinase family. RAF subfamily. Phosphorylation at Ser-259 inactivates kinase activity. Dephosphorylation of Ser-259 by a complex containing protein phosphatase 1 relieves inactivation, leading to stimulate RAF1 activity. In terms of tissue distribution, isoform 1 was present in all tissues tested: skeletal muscle, intestine, brain, gizzard, heart, lung, kidney, bone marrow, spleen and bursa of Fabricius. Isoform 2 was only detected in brain, heart and skeletal muscle. In brain and heart isoform 1 is more abundant than isoform 2. In skeletal muscle isoform 2 is more abundant than isoform 1.

It localises to the cytoplasm. It is found in the cell membrane. It carries out the reaction L-seryl-[protein] + ATP = O-phospho-L-seryl-[protein] + ADP + H(+). It catalyses the reaction L-threonyl-[protein] + ATP = O-phospho-L-threonyl-[protein] + ADP + H(+). In terms of biological role, serine/threonine-protein kinase that acts as a regulatory link between the membrane-associated Ras GTPases and the MAPK/ERK cascade, and this critical regulatory link functions as a switch determining cell fate decisions. RAF1 activation initiates a mitogen-activated protein kinase (MAPK) cascade that comprises a sequential phosphorylation of the dual-specific MAPK kinases (MAP2K1/MEK1 and MAP2K2/MEK2) and the extracellular signal-regulated kinases (MAPK3/ERK1 and MAPK1/ERK2). The polypeptide is RAF proto-oncogene serine/threonine-protein kinase (RAF1) (Gallus gallus (Chicken)).